Here is a 510-residue protein sequence, read N- to C-terminus: Probable allantoinase 2 (510 aa).

The Zn(2+) site is built by histidine 97, histidine 99, lysine 185, histidine 228, histidine 287, and aspartate 360. An N6-carboxylysine modification is found at lysine 185.

Belongs to the metallo-dependent hydrolases superfamily. Allantoinase family. Homotetramer. Zn(2+) is required as a cofactor. In terms of processing, carboxylation allows a single lysine to coordinate two zinc ions.

It catalyses the reaction (S)-allantoin + H2O = allantoate + H(+). Its pathway is nitrogen metabolism; (S)-allantoin degradation; allantoate from (S)-allantoin: step 1/1. The sequence is that of Probable allantoinase 2 (allB2) from Dictyostelium discoideum (Social amoeba).